We begin with the raw amino-acid sequence, 473 residues long: MSSKSYSAGVKDYRDTYWEPDYQVKDSDFLACFKVVPQAGVPREEAAAAVAAESSTGTWTTVWTDLLTDLDYYKGRAYKIEDVPGDDEAFYAFIAYPIDLFEESSVVNVFTSLVGNVFGFKAVRSLRLEDVRIPLAYVMTCNGPPHGIQVERDKMDKYGRGLLGCTIKPKLGLSAKNYGRAVYECLRGGLDFTKDDENVNSQPFMRWRDRFLFVQEATEKAQQETGERKGHYLNVTAPSPEEMYERAEFAKEIGAPIIMHDFLTGGFCANTGLARWCRKNGMLLHIHRAMHAVMDRNPRHGIHFRVLAKALRLSGGDHLHTGTVVGKLEGDRAATEGWIDLLRERFIPEDRARGIFFDQDWGAMPGVFAVASGGIHVWHMPALVSIFGDDAVFQFGGGTLGHPWGNAAGAAANRVALEACVKARNEGRNLEREGKEILQAAAQHSPELKIAMETWKEIKFEFETVDKLDTTHR.

Residues asparagine 116 and threonine 166 each contribute to the substrate site. The active-site Proton acceptor is lysine 168. Substrate is bound at residue lysine 170. Positions 194, 196, and 197 each coordinate Mg(2+). At lysine 194 the chain carries N6-carboxylysine. Histidine 287 acts as the Proton acceptor in catalysis. Arginine 288, histidine 320, and serine 372 together coordinate substrate.

This sequence belongs to the RuBisCO large chain family. Type I subfamily. In terms of assembly, heterohexadecamer of 8 large chains and 8 small chains. Mg(2+) is required as a cofactor.

The catalysed reaction is 2 (2R)-3-phosphoglycerate + 2 H(+) = D-ribulose 1,5-bisphosphate + CO2 + H2O. It carries out the reaction D-ribulose 1,5-bisphosphate + O2 = 2-phosphoglycolate + (2R)-3-phosphoglycerate + 2 H(+). Its function is as follows. RuBisCO catalyzes two reactions: the carboxylation of D-ribulose 1,5-bisphosphate, the primary event in carbon dioxide fixation, as well as the oxidative fragmentation of the pentose substrate. Both reactions occur simultaneously and in competition at the same active site. The sequence is that of Ribulose bisphosphate carboxylase large chain from Alkalilimnicola ehrlichii (strain ATCC BAA-1101 / DSM 17681 / MLHE-1).